A 176-amino-acid polypeptide reads, in one-letter code: Nucleoside triphosphate/diphosphate phosphatase (176 aa).

Arg-23 acts as the Proton donor in catalysis. Mg(2+)-binding residues include Asn-87, Asp-103, Asp-105, Asp-107, Asp-120, and Glu-123.

This sequence belongs to the Ntdp family. Requires Mg(2+) as cofactor.

It carries out the reaction a ribonucleoside 5'-triphosphate + H2O = a ribonucleoside 5'-diphosphate + phosphate + H(+). The catalysed reaction is a ribonucleoside 5'-diphosphate + H2O = a ribonucleoside 5'-phosphate + phosphate + H(+). In terms of biological role, has nucleoside phosphatase activity towards nucleoside triphosphates and nucleoside diphosphates. The sequence is that of Nucleoside triphosphate/diphosphate phosphatase from Bacillus pumilus (strain SAFR-032).